A 204-amino-acid chain; its full sequence is Peptidyl-prolyl cis-trans isomerase CYP20-1 (204 aa).

A signal peptide spans 1–23 (MASSVTLLLWSLLLLGTLSAIQA). The region spanning 38-201 (YFDVEIDGKA…SKVVIVDSGE (164 aa)) is the PPIase cyclophilin-type domain.

Belongs to the cyclophilin-type PPIase family. In terms of assembly, interacts with the PP2A A subunit PP2AA1/RCN1. As to expression, ubiquitous, mostly in aerial organs. Higher levels in leaf and buds, and lower levels in seedlings.

It is found in the endoplasmic reticulum. It localises to the secreted. The catalysed reaction is [protein]-peptidylproline (omega=180) = [protein]-peptidylproline (omega=0). Binds cyclosporin A (CsA). CsA mediates some of its effects via an inhibitory action on PPIase. In terms of biological role, PPIases accelerate the folding of proteins. It catalyzes the cis-trans isomerization of proline imidic peptide bonds in oligopeptides. Seems to be involved in root development. The polypeptide is Peptidyl-prolyl cis-trans isomerase CYP20-1 (CYP20-1) (Arabidopsis thaliana (Mouse-ear cress)).